We begin with the raw amino-acid sequence, 320 residues long: Malate dehydrogenase (320 aa).

NAD(+) contacts are provided by residues 10 to 15 (GAGQIG) and aspartate 34. Substrate-binding residues include arginine 83 and arginine 89. Residues asparagine 96 and 119-121 (ITN) each bind NAD(+). Positions 121 and 152 each coordinate substrate. Histidine 176 functions as the Proton acceptor in the catalytic mechanism.

Belongs to the LDH/MDH superfamily. MDH type 3 family.

The catalysed reaction is (S)-malate + NAD(+) = oxaloacetate + NADH + H(+). Catalyzes the reversible oxidation of malate to oxaloacetate. The chain is Malate dehydrogenase from Methylorubrum populi (strain ATCC BAA-705 / NCIMB 13946 / BJ001) (Methylobacterium populi).